We begin with the raw amino-acid sequence, 273 residues long: MCNTQATPSDPGITVAHPKKRYYRQRAHSNPMADHTFQYPVKPEIMDWSEYYPDYFKPLVPDSAHDDAKDLQERKEQHQVEFADIGCGYGGLLVELSPLFPNTLMLGLEIRVKVSDYVQDRIKSLRASHLGQYQNIACIRSNAMKYIPNFFKKGQLSKMFFLFPDPHFKKTKHKWRIISPTLLAEYAYVLRIGGMVYTITDVEEVHTWMVKHFTEHPLFERVAKEELVNDIVVGKLGTSTEEGKKVQRNKGLNLLAVFRRIENSTFIQRDSQQ.

G86, E109, R111, N142, A143, and L162 together coordinate S-adenosyl-L-methionine. The active site involves D165. The interval 166–174 (PHFKKTKHK) is alphaC helix. T240 and E242 together coordinate S-adenosyl-L-methionine. Positions 240-248 (TEEGKKVQR) are alpha6 helix.

The protein belongs to the class I-like SAM-binding methyltransferase superfamily. TrmB family. As to quaternary structure, catalytic component of the METTL1-WDR4 complex, composed of mettl1 and wdr4.

The protein resides in the nucleus. The enzyme catalyses guanosine(46) in tRNA + S-adenosyl-L-methionine = N(7)-methylguanosine(46) in tRNA + S-adenosyl-L-homocysteine. It carries out the reaction a guanosine in mRNA + S-adenosyl-L-methionine = an N(7)-methylguanosine in mRNA + S-adenosyl-L-homocysteine. It catalyses the reaction a guanosine in miRNA + S-adenosyl-L-methionine = an N(7)-methylguanosine in miRNA + S-adenosyl-L-homocysteine. The protein operates within tRNA modification; N(7)-methylguanine-tRNA biosynthesis. Functionally, catalytic component of METTL1-WDR4 methyltransferase complex that mediates the formation of N(7)-methylguanine in a subset of RNA species, such as tRNAs, mRNAs and microRNAs (miRNAs). Catalyzes the formation of N(7)-methylguanine at position 46 (m7G46) in a large subset of tRNAs that contain the 5'-RAGGU-3' motif within the variable loop. M7G46 interacts with C13-G22 in the D-loop to stabilize tRNA tertiary structure and protect tRNAs from decay. Also acts as a methyltransferase for a subset of internal N(7)-methylguanine in mRNAs. Internal N(7)-methylguanine methylation of mRNAs in response to stress promotes their relocalization to stress granules, thereby suppressing their translation. Also methylates a specific subset of miRNAs. This is tRNA (guanine-N(7)-)-methyltransferase A (mettl1-A) from Xenopus tropicalis (Western clawed frog).